The chain runs to 89 residues: UPF0175 protein APE_0276a (89 aa).

This sequence belongs to the UPF0175 family.

This Aeropyrum pernix (strain ATCC 700893 / DSM 11879 / JCM 9820 / NBRC 100138 / K1) protein is UPF0175 protein APE_0276a.